We begin with the raw amino-acid sequence, 446 residues long: Adenylosuccinate synthetase (446 aa).

GTP is bound by residues 20-26 (GDEGKGK) and 48-50 (GHT). The active-site Proton acceptor is the D21. D21 and G48 together coordinate Mg(2+). Residues 21–24 (DEGK), 46–49 (NAGH), T137, R151, Q232, T247, and R319 each bind IMP. H49 acts as the Proton donor in catalysis. 315–321 (SVTGRPR) serves as a coordination point for substrate. GTP contacts are provided by residues R321, 347-349 (KLD), and 429-431 (STG).

This sequence belongs to the adenylosuccinate synthetase family. In terms of assembly, homodimer. It depends on Mg(2+) as a cofactor.

It is found in the cytoplasm. The enzyme catalyses IMP + L-aspartate + GTP = N(6)-(1,2-dicarboxyethyl)-AMP + GDP + phosphate + 2 H(+). It participates in purine metabolism; AMP biosynthesis via de novo pathway; AMP from IMP: step 1/2. Its function is as follows. Plays an important role in the de novo pathway of purine nucleotide biosynthesis. Catalyzes the first committed step in the biosynthesis of AMP from IMP. This is Adenylosuccinate synthetase from Polynucleobacter asymbioticus (strain DSM 18221 / CIP 109841 / QLW-P1DMWA-1) (Polynucleobacter necessarius subsp. asymbioticus).